A 156-amino-acid chain; its full sequence is ATP synthase subunit b', chloroplastic (156 aa).

Residues 24–44 traverse the membrane as a helical segment; sequence ATLPLVAIQFILLMVLLNILL.

This sequence belongs to the ATPase B chain family. In terms of assembly, F-type ATPases have 2 components, F(1) - the catalytic core - and F(0) - the membrane proton channel. F(1) has five subunits: alpha(3), beta(3), gamma(1), delta(1), epsilon(1). F(0) has four main subunits: a(1), b(1), b'(1) and c(10-14). The alpha and beta chains form an alternating ring which encloses part of the gamma chain. F(1) is attached to F(0) by a central stalk formed by the gamma and epsilon chains, while a peripheral stalk is formed by the delta, b and b' chains.

It localises to the plastid. Its subcellular location is the chloroplast thylakoid membrane. F(1)F(0) ATP synthase produces ATP from ADP in the presence of a proton or sodium gradient. F-type ATPases consist of two structural domains, F(1) containing the extramembraneous catalytic core and F(0) containing the membrane proton channel, linked together by a central stalk and a peripheral stalk. During catalysis, ATP synthesis in the catalytic domain of F(1) is coupled via a rotary mechanism of the central stalk subunits to proton translocation. In terms of biological role, component of the F(0) channel, it forms part of the peripheral stalk, linking F(1) to F(0). The b'-subunit is a diverged and duplicated form of b found in plants and photosynthetic bacteria. The polypeptide is ATP synthase subunit b', chloroplastic (Phaeodactylum tricornutum (strain CCAP 1055/1)).